Reading from the N-terminus, the 443-residue chain is NADH-quinone oxidoreductase subunit D 1 (443 aa).

It belongs to the complex I 49 kDa subunit family. As to quaternary structure, NDH-1 is composed of 14 different subunits. Subunits NuoB, C, D, E, F, and G constitute the peripheral sector of the complex.

The protein resides in the cell membrane. The enzyme catalyses a quinone + NADH + 5 H(+)(in) = a quinol + NAD(+) + 4 H(+)(out). NDH-1 shuttles electrons from NADH, via FMN and iron-sulfur (Fe-S) centers, to quinones in the respiratory chain. The immediate electron acceptor for the enzyme in this species is believed to be a menaquinone. Couples the redox reaction to proton translocation (for every two electrons transferred, four hydrogen ions are translocated across the cytoplasmic membrane), and thus conserves the redox energy in a proton gradient. This chain is NADH-quinone oxidoreductase subunit D 1, found in Streptomyces avermitilis (strain ATCC 31267 / DSM 46492 / JCM 5070 / NBRC 14893 / NCIMB 12804 / NRRL 8165 / MA-4680).